Here is a 345-residue protein sequence, read N- to C-terminus: Holliday junction branch migration complex subunit RuvB (345 aa).

The segment at methionine 1–tyrosine 186 is large ATPase domain (RuvB-L). Residues leucine 25, arginine 26, glycine 67, lysine 70, threonine 71, serine 72, glutamate 133–phenylalanine 135, arginine 176, tyrosine 186, and arginine 223 contribute to the ATP site. Residue threonine 71 participates in Mg(2+) binding. The small ATPAse domain (RuvB-S) stretch occupies residues glutamate 187 to aspartate 257. The head domain (RuvB-H) stretch occupies residues glutamate 260–glutamate 345. The DNA site is built by arginine 315 and arginine 320.

This sequence belongs to the RuvB family. In terms of assembly, homohexamer. Forms an RuvA(8)-RuvB(12)-Holliday junction (HJ) complex. HJ DNA is sandwiched between 2 RuvA tetramers; dsDNA enters through RuvA and exits via RuvB. An RuvB hexamer assembles on each DNA strand where it exits the tetramer. Each RuvB hexamer is contacted by two RuvA subunits (via domain III) on 2 adjacent RuvB subunits; this complex drives branch migration. In the full resolvosome a probable DNA-RuvA(4)-RuvB(12)-RuvC(2) complex forms which resolves the HJ.

The protein resides in the cytoplasm. It carries out the reaction ATP + H2O = ADP + phosphate + H(+). In terms of biological role, the RuvA-RuvB-RuvC complex processes Holliday junction (HJ) DNA during genetic recombination and DNA repair, while the RuvA-RuvB complex plays an important role in the rescue of blocked DNA replication forks via replication fork reversal (RFR). RuvA specifically binds to HJ cruciform DNA, conferring on it an open structure. The RuvB hexamer acts as an ATP-dependent pump, pulling dsDNA into and through the RuvAB complex. RuvB forms 2 homohexamers on either side of HJ DNA bound by 1 or 2 RuvA tetramers; 4 subunits per hexamer contact DNA at a time. Coordinated motions by a converter formed by DNA-disengaged RuvB subunits stimulates ATP hydrolysis and nucleotide exchange. Immobilization of the converter enables RuvB to convert the ATP-contained energy into a lever motion, pulling 2 nucleotides of DNA out of the RuvA tetramer per ATP hydrolyzed, thus driving DNA branch migration. The RuvB motors rotate together with the DNA substrate, which together with the progressing nucleotide cycle form the mechanistic basis for DNA recombination by continuous HJ branch migration. Branch migration allows RuvC to scan DNA until it finds its consensus sequence, where it cleaves and resolves cruciform DNA. This chain is Holliday junction branch migration complex subunit RuvB, found in Mycobacterium marinum (strain ATCC BAA-535 / M).